Reading from the N-terminus, the 223-residue chain is MNIAKLIDHTILKANTTKEDVMKVIEEAKEYKFASVCINPTWVKLAAEELAGHDVDVCTVIGFPLGASTTETKAFETKDAIAKGATEVDMVINVGALKDGDNELVEKDIYEVVQAAKGKALVKVIIETCLLTDEEKVRACELSVKAGADFVKTSTGFSTGGATAEDIALMRKTVGPNVGVKASGGVRTREDAEKMVAAGASRVGASASVAIVLNDAKGATDNY.

D89 functions as the Proton donor/acceptor in the catalytic mechanism. K152 functions as the Schiff-base intermediate with acetaldehyde in the catalytic mechanism. K181 functions as the Proton donor/acceptor in the catalytic mechanism.

The protein belongs to the DeoC/FbaB aldolase family. DeoC type 1 subfamily.

Its subcellular location is the cytoplasm. It carries out the reaction 2-deoxy-D-ribose 5-phosphate = D-glyceraldehyde 3-phosphate + acetaldehyde. The protein operates within carbohydrate degradation; 2-deoxy-D-ribose 1-phosphate degradation; D-glyceraldehyde 3-phosphate and acetaldehyde from 2-deoxy-alpha-D-ribose 1-phosphate: step 2/2. Functionally, catalyzes a reversible aldol reaction between acetaldehyde and D-glyceraldehyde 3-phosphate to generate 2-deoxy-D-ribose 5-phosphate. The protein is Deoxyribose-phosphate aldolase of Bacillus cereus (strain ZK / E33L).